Consider the following 222-residue polypeptide: Probable transaldolase (222 aa).

K91 functions as the Schiff-base intermediate with substrate in the catalytic mechanism.

This sequence belongs to the transaldolase family. Type 3B subfamily.

It localises to the cytoplasm. The enzyme catalyses D-sedoheptulose 7-phosphate + D-glyceraldehyde 3-phosphate = D-erythrose 4-phosphate + beta-D-fructose 6-phosphate. It functions in the pathway carbohydrate degradation; pentose phosphate pathway; D-glyceraldehyde 3-phosphate and beta-D-fructose 6-phosphate from D-ribose 5-phosphate and D-xylulose 5-phosphate (non-oxidative stage): step 2/3. Transaldolase is important for the balance of metabolites in the pentose-phosphate pathway. This is Probable transaldolase from Chlorobium limicola (strain DSM 245 / NBRC 103803 / 6330).